The primary structure comprises 92 residues: Bombyxin A-1 (92 aa).

The signal sequence occupies residues M1–T19. Q20 is modified (pyrrolidone carboxylic acid). Intrachain disulfides connect C29/C79, C41/C92, and C78/C83. A propeptide spans S50–G70 (c peptide like).

The protein belongs to the insulin family. As to quaternary structure, heterodimer of a B chain and an A chain linked by two disulfide bonds.

It localises to the secreted. Functionally, brain peptide responsible for activation of prothoracic glands to produce ecdysone in insects. The protein is Bombyxin A-1 (BBXA1) of Bombyx mori (Silk moth).